Reading from the N-terminus, the 176-residue chain is O-acetyl-ADP-ribose deacetylase (176 aa).

In terms of domain architecture, Macro spans M1–D175. Residues D11 to I12, N25, G33 to D35, and S122 to Y126 each bind substrate. D35 serves as the catalytic Proton acceptor.

This sequence belongs to the MacroD-type family. YmdB subfamily. Homodimer. Interacts with RNase III.

The enzyme catalyses 3''-O-acetyl-ADP-D-ribose + H2O = ADP-D-ribose + acetate + H(+). The catalysed reaction is 2''-O-acetyl-ADP-D-ribose + H2O = ADP-D-ribose + acetate + H(+). Its function is as follows. Deacetylates O-acetyl-ADP ribose to yield ADP-ribose and free acetate. Down-regulates ribonuclease 3 (RNase III) activity. Acts by interacting directly with the region of the ribonuclease that is required for dimerization/activation. In Cronobacter turicensis (strain DSM 18703 / CCUG 55852 / LMG 23827 / z3032), this protein is O-acetyl-ADP-ribose deacetylase.